The primary structure comprises 431 residues: Enolase (431 aa).

A (2R)-2-phosphoglycerate-binding site is contributed by Q167. E209 acts as the Proton donor in catalysis. Residues D246, E290, and D317 each coordinate Mg(2+). (2R)-2-phosphoglycerate is bound by residues K342, R371, S372, and K393. The active-site Proton acceptor is the K342.

The protein belongs to the enolase family. Component of the RNA degradosome, a multiprotein complex involved in RNA processing and mRNA degradation. Requires Mg(2+) as cofactor.

The protein localises to the cytoplasm. Its subcellular location is the secreted. It localises to the cell surface. It catalyses the reaction (2R)-2-phosphoglycerate = phosphoenolpyruvate + H2O. It participates in carbohydrate degradation; glycolysis; pyruvate from D-glyceraldehyde 3-phosphate: step 4/5. Catalyzes the reversible conversion of 2-phosphoglycerate (2-PG) into phosphoenolpyruvate (PEP). It is essential for the degradation of carbohydrates via glycolysis. This Yersinia pseudotuberculosis serotype O:1b (strain IP 31758) protein is Enolase.